The primary structure comprises 454 residues: Bifunctional protein GlmU (454 aa).

A pyrophosphorylase region spans residues Met1–Arg226. UDP-N-acetyl-alpha-D-glucosamine is bound by residues Leu8–Gly11, Lys22, Gln73, Gly78–Thr79, Tyr100–Asp102, Gly137, Glu151, Asn166, and Asn224. Residue Asp102 participates in Mg(2+) binding. Asn224 lines the Mg(2+) pocket. The linker stretch occupies residues Val227 to Ala247. The interval Gly248–Glu454 is N-acetyltransferase. Arg330 and Lys348 together coordinate UDP-N-acetyl-alpha-D-glucosamine. His360 acts as the Proton acceptor in catalysis. Residues Tyr363 and Asn374 each coordinate UDP-N-acetyl-alpha-D-glucosamine. Residues Ala377, Asn383–Tyr384, Ser402, Ala420, and Arg437 each bind acetyl-CoA.

In the N-terminal section; belongs to the N-acetylglucosamine-1-phosphate uridyltransferase family. This sequence in the C-terminal section; belongs to the transferase hexapeptide repeat family. As to quaternary structure, homotrimer. Requires Mg(2+) as cofactor.

It is found in the cytoplasm. The catalysed reaction is alpha-D-glucosamine 1-phosphate + acetyl-CoA = N-acetyl-alpha-D-glucosamine 1-phosphate + CoA + H(+). It carries out the reaction N-acetyl-alpha-D-glucosamine 1-phosphate + UTP + H(+) = UDP-N-acetyl-alpha-D-glucosamine + diphosphate. It participates in nucleotide-sugar biosynthesis; UDP-N-acetyl-alpha-D-glucosamine biosynthesis; N-acetyl-alpha-D-glucosamine 1-phosphate from alpha-D-glucosamine 6-phosphate (route II): step 2/2. It functions in the pathway nucleotide-sugar biosynthesis; UDP-N-acetyl-alpha-D-glucosamine biosynthesis; UDP-N-acetyl-alpha-D-glucosamine from N-acetyl-alpha-D-glucosamine 1-phosphate: step 1/1. Its pathway is bacterial outer membrane biogenesis; LPS lipid A biosynthesis. Functionally, catalyzes the last two sequential reactions in the de novo biosynthetic pathway for UDP-N-acetylglucosamine (UDP-GlcNAc). The C-terminal domain catalyzes the transfer of acetyl group from acetyl coenzyme A to glucosamine-1-phosphate (GlcN-1-P) to produce N-acetylglucosamine-1-phosphate (GlcNAc-1-P), which is converted into UDP-GlcNAc by the transfer of uridine 5-monophosphate (from uridine 5-triphosphate), a reaction catalyzed by the N-terminal domain. The chain is Bifunctional protein GlmU from Shewanella sp. (strain MR-7).